Here is a 360-residue protein sequence, read N- to C-terminus: Phospho-N-acetylmuramoyl-pentapeptide-transferase (360 aa).

10 consecutive transmembrane segments (helical) span residues 26 to 46 (TILGVLTALGIALLVGPAVIQ), 70 to 90 (GTPTMGGALILVAIAVATLLW), 97 to 117 (YVWVVLLTTLAFGVIGGVDDY), 132 to 152 (AKFFWQTVVALMAAVFLFSTA), 168 to 188 (VVLPLGLLFIPLVWLVVVGSS), 199 to 219 (GLAILPSVLVAGGLAVFAYAT), 236 to 256 (AGEVVVFCGALIGAGLGFLWF), 263 to 283 (VFMGDVGALALGAALGILAVV), 288 to 308 (LVLLIMGGVFVVETLSVMLQV), and 338 to 358 (VIVRFWIITVVLVLVGLAMLK).

This sequence belongs to the glycosyltransferase 4 family. MraY subfamily. The cofactor is Mg(2+).

Its subcellular location is the cell inner membrane. It carries out the reaction UDP-N-acetyl-alpha-D-muramoyl-L-alanyl-gamma-D-glutamyl-meso-2,6-diaminopimeloyl-D-alanyl-D-alanine + di-trans,octa-cis-undecaprenyl phosphate = di-trans,octa-cis-undecaprenyl diphospho-N-acetyl-alpha-D-muramoyl-L-alanyl-D-glutamyl-meso-2,6-diaminopimeloyl-D-alanyl-D-alanine + UMP. Its pathway is cell wall biogenesis; peptidoglycan biosynthesis. In terms of biological role, catalyzes the initial step of the lipid cycle reactions in the biosynthesis of the cell wall peptidoglycan: transfers peptidoglycan precursor phospho-MurNAc-pentapeptide from UDP-MurNAc-pentapeptide onto the lipid carrier undecaprenyl phosphate, yielding undecaprenyl-pyrophosphoryl-MurNAc-pentapeptide, known as lipid I. The protein is Phospho-N-acetylmuramoyl-pentapeptide-transferase of Alkalilimnicola ehrlichii (strain ATCC BAA-1101 / DSM 17681 / MLHE-1).